We begin with the raw amino-acid sequence, 234 residues long: Orotidine 5'-phosphate decarboxylase (234 aa).

Residues D10, K32, 59–68, T119, R180, Q189, G209, and R210 each bind substrate; that span reads DLKFHDIPNT. The active-site Proton donor is the K61.

This sequence belongs to the OMP decarboxylase family. Type 1 subfamily. As to quaternary structure, homodimer.

The enzyme catalyses orotidine 5'-phosphate + H(+) = UMP + CO2. It participates in pyrimidine metabolism; UMP biosynthesis via de novo pathway; UMP from orotate: step 2/2. Functionally, catalyzes the decarboxylation of orotidine 5'-monophosphate (OMP) to uridine 5'-monophosphate (UMP). The chain is Orotidine 5'-phosphate decarboxylase from Mannheimia succiniciproducens (strain KCTC 0769BP / MBEL55E).